Here is an 840-residue protein sequence, read N- to C-terminus: V-type proton ATPase subunit a, vacuolar isoform (840 aa).

An N-acetylalanine modification is found at Ala-2. Residues Ala-2–Glu-404 are Cytoplasmic-facing. Residues Leu-117–Leu-145 adopt a coiled-coil conformation. The helical transmembrane segment at Ile-405–Phe-423 threads the bilayer. Topologically, residues Gly-424–Asp-425 are vacuolar. Residues Met-426–Asn-442 form a helical membrane-spanning segment. At Glu-443–Asp-456 the chain is on the cytoplasmic side. A helical membrane pass occupies residues Met-457–Thr-486. The Vacuolar portion of the chain corresponds to Met-487–Ser-534. Residues Tyr-535–Phe-554 form a helical membrane-spanning segment. Residues Ser-555–Phe-572 lie on the Cytoplasmic side of the membrane. The chain crosses the membrane as a helical span at residues Ile-573–Lys-593. The Vacuolar segment spans residues Trp-594 to Phe-636. A helical transmembrane segment spans residues Leu-637 to Phe-656. Residues Lys-657–Thr-719 lie on the Cytoplasmic side of the membrane. Residues Ile-720–Ala-744 traverse the membrane as a helical segment. The Vacuolar segment spans residues Gln-745–Val-765. A helical membrane pass occupies residues Gly-766–Glu-804. The Cytoplasmic portion of the chain corresponds to Ser-805–Ser-840.

It belongs to the V-ATPase 116 kDa subunit family. As to quaternary structure, V-ATPase is a heteromultimeric enzyme composed of a peripheral catalytic V1 complex (components A to H) attached to an integral membrane V0 proton pore complex (components: a, c, c', c'', d, e, f and VOA1). Post-translationally, glycosylated.

It localises to the vacuole membrane. Functionally, subunit of the V0 complex of vacuolar(H+)-ATPase (V-ATPase), a multisubunit enzyme composed of a peripheral complex (V1) that hydrolyzes ATP and a membrane integral complex (V0) that translocates protons. V-ATPase is responsible for acidifying and maintaining the pH of intracellular compartments. Is present only in vacuolar V-ATPase complexes; enzymes containing this subunit have a 4-fold higher ratio of proton transport to ATP hydrolysis than complexes containing the Golgi/endosomal isoform and undergo reversible dissociation of V1 and V0 in response to glucose depletion. The protein is V-type proton ATPase subunit a, vacuolar isoform of Saccharomyces cerevisiae (strain ATCC 204508 / S288c) (Baker's yeast).